We begin with the raw amino-acid sequence, 479 residues long: Ribosomal RNA small subunit methyltransferase F (479 aa).

S-adenosyl-L-methionine-binding positions include 125 to 131 (AAAPGSK), glutamate 149, aspartate 176, and aspartate 194. Cysteine 247 acts as the Nucleophile in catalysis.

The protein belongs to the class I-like SAM-binding methyltransferase superfamily. RsmB/NOP family.

Its subcellular location is the cytoplasm. It carries out the reaction cytidine(1407) in 16S rRNA + S-adenosyl-L-methionine = 5-methylcytidine(1407) in 16S rRNA + S-adenosyl-L-homocysteine + H(+). In terms of biological role, specifically methylates the cytosine at position 1407 (m5C1407) of 16S rRNA. This Escherichia coli (strain ATCC 8739 / DSM 1576 / NBRC 3972 / NCIMB 8545 / WDCM 00012 / Crooks) protein is Ribosomal RNA small subunit methyltransferase F.